Reading from the N-terminus, the 304-residue chain is RING-H2 finger protein ATL2 (304 aa).

A helical transmembrane segment spans residues 30–50 (IMLSAIVILFFVVILMVFLHL). An RING-type; atypical zinc finger spans residues 119–161 (CAVCLSEFEESETGRVLPNCQHTFHVDCIDMWFHSHSTCPLCR). Positions 194 to 304 (EPSSSSGLTD…DIERGGEESR (111 aa)) are disordered. Residues 227 to 244 (VPRRTFSEFEDELTRRDS) show a composition bias toward basic and acidic residues. A compositionally biased stretch (polar residues) spans 283-293 (PTLSCRIQMTE). Residues 295–304 (DIERGGEESR) show a composition bias toward basic and acidic residues.

Belongs to the RING-type zinc finger family. ATL subfamily. Preferentially expressed around the apical meristem region.

Its subcellular location is the membrane. The catalysed reaction is S-ubiquitinyl-[E2 ubiquitin-conjugating enzyme]-L-cysteine + [acceptor protein]-L-lysine = [E2 ubiquitin-conjugating enzyme]-L-cysteine + N(6)-ubiquitinyl-[acceptor protein]-L-lysine.. It functions in the pathway protein modification; protein ubiquitination. Its function is as follows. May be involved in the early steps of the plant defense signaling pathway. The chain is RING-H2 finger protein ATL2 (ATL2) from Arabidopsis thaliana (Mouse-ear cress).